The chain runs to 177 residues: Interleukin-1 receptor antagonist protein (177 aa).

An N-terminal signal peptide occupies residues 1–25 (MRPSRSTRRHLISLLLFLFHSETAC). Cys-91 and Cys-141 are joined by a disulfide. Residue Asn-109 is glycosylated (N-linked (GlcNAc...) asparagine).

The protein belongs to the IL-1 family.

It localises to the secreted. Its function is as follows. Anti-inflammatory antagonist of interleukin-1 family of proinflammatory cytokines such as interleukin-1beta/IL1B and interleukin-1alpha/IL1A. Protects from immune dysregulation and uncontrolled systemic inflammation triggered by IL1 for a range of innate stimulatory agents such as pathogens. This is Interleukin-1 receptor antagonist protein (IL1RN) from Oryctolagus cuniculus (Rabbit).